Reading from the N-terminus, the 717-residue chain is Probable E3 ubiquitin-protein ligase WAVH2 (717 aa).

2 stretches are compositionally biased toward polar residues: residues 13 to 28 and 85 to 94; these read VSSN…SLHT and RTTSNATPRT. The tract at residues 13-120 is disordered; sequence VSSNQDKPQQ…SSSSSSSQGG (108 aa). Positions 95 to 117 are enriched in low complexity; the sequence is SNSSSPKFFSNPSSPKSSSSSSS. The RING-type; atypical zinc finger occupies 140 to 184; that stretch reads CAICLQRVNSNQSNSTAAIFTAECSHSFHLSCVNGLEDKRCPFCS. Residues 326-456 form the VWFA domain; it reads DLVTVLDLSN…LNATRIPFVV (131 aa).

Expressed in root tips, cotyledons, leaf primordia and hypocotyls.

The catalysed reaction is S-ubiquitinyl-[E2 ubiquitin-conjugating enzyme]-L-cysteine + [acceptor protein]-L-lysine = [E2 ubiquitin-conjugating enzyme]-L-cysteine + N(6)-ubiquitinyl-[acceptor protein]-L-lysine.. In terms of biological role, probable E3 ubiquitin-protein ligase involved in the regulation of root growth. Acts as a positive regulator of root gravitropism. This chain is Probable E3 ubiquitin-protein ligase WAVH2, found in Arabidopsis thaliana (Mouse-ear cress).